Consider the following 152-residue polypeptide: MDSTAFVGAAAPLRVAAAARSTICMAAADDKPVVSRRAALTGAAAAALAAVAGSLPALAETEYANVPFLGGSVIIDINNANVRAYAKYPGMYPTVAGLIATNGPFETVSDLYKIPGLTDLQIATLKKYEDKLVALTPTPEYELDKVNNGLYR.

The transit peptide at 1-35 (MDSTAFVGAAAPLRVAAAARSTICMAAADDKPVVS) directs the protein to the chloroplast. A thylakoid-targeting transit peptide spans 36–59 (RRAALTGAAAAALAAVAGSLPALA).

This sequence belongs to the PsbU family. PSII is composed of 1 copy each of membrane proteins PsbA, PsbB, PsbC, PsbD, PsbE, PsbF, PsbH, PsbI, PsbJ, PsbK, PsbL, PsbM, PsbT, PsbX, PsbY, PsbZ, Psb30/Ycf12, at least 3 peripheral proteins of the oxygen-evolving complex and a large number of cofactors. It forms dimeric complexes. The oxygen-evolving complex in red algae is composed of PsbO (OEC33), PsbQ', cytochrome c-550 and PsbU. Predicted to be translocated into the thylakoid lumen by the Tat system.

It localises to the plastid. The protein localises to the chloroplast thylakoid membrane. In terms of biological role, one of the extrinsic, lumenal subunits of photosystem II (PSII). PSII is a light-driven water plastoquinone oxidoreductase, using light energy to abstract electrons from H(2)O, generating a proton gradient subsequently used for ATP formation. The extrinsic proteins stabilize the structure of photosystem II oxygen-evolving complex (OEC), the ion environment of oxygen evolution and protect the OEC against heat-induced inactivation. The protein is Photosystem II extrinsic protein U, chloroplastic of Pyropia yezoensis (Susabi-nori).